A 1481-amino-acid polypeptide reads, in one-letter code: Cystic fibrosis transmembrane conductance regulator (1481 aa).

Topologically, residues 1–77 (MQRSPLEKAS…KLINALRRCF (77 aa)) are cytoplasmic. Residues 78–98 (FWRFMFYGILLYLGEVTKAVQ) form a helical membrane-spanning segment. Residues 81–365 (FMFYGILLYL…WAVQTWYDSL (285 aa)) enclose the ABC transmembrane type-1 1 domain. The Extracellular portion of the chain corresponds to 99 to 122 (PLLLGRIIASYDPDNKEERSIAIY). The helical transmembrane segment at 123–146 (LGIGLCLLFIVRTLLLHPAIFGLH) threads the bilayer. Over 147-195 (HIGMQMRIAMFSLIYKKTLKLSSRVLDKISIGQLVSLLSNNLNKFDEGL) the chain is Cytoplasmic. Residues 196–216 (ALAHFVWIVPLQVALLMGLIW) form a helical membrane-spanning segment. At 217-222 (ELLQAS) the chain is on the extracellular side. A helical membrane pass occupies residues 223-243 (AFCGLGFLIVLALFQAGLGRM). The Cytoplasmic segment spans residues 244–298 (MMKYRDQRAGKINERLVITSEMIENIQSVKAYCWEEAMEKMIENLRQTELKLTRK). Residues 299 to 319 (AAYVRYFNSSAFFFSGFFVVF) form a helical membrane-spanning segment. Residues 320–339 (LSVLPYALIKGIVLRKIFTT) are Extracellular-facing. The chain crosses the membrane as a helical span at residues 340–358 (ISFCIVLRMAVTRQFPWAV). Over 359–858 (QTWYDSLGAI…YLRYITVHKS (500 aa)) the chain is Cytoplasmic. ATP contacts are provided by residues W401, S434, 458–465 (GSTGAGKT), and Q493. Residues 423–646 (NDDDSLFFSN…RPDFSSKLMG (224 aa)) enclose the ABC transporter 1 domain. C524 carries S-palmitoyl cysteine lipidation. Residues S549 and S660 each carry the phosphoserine modification. The tract at residues 654–831 (SAERRNSILT…EEINEEDLKE (178 aa)) is disordered R region. S670 is subject to Phosphoserine; by PKA. S686 carries the phosphoserine modification. K688 participates in a covalent cross-link: Glycyl lysine isopeptide (Lys-Gly) (interchain with G-Cter in ubiquitin). 2 positions are modified to phosphoserine: S700 and S712. At T717 the chain carries Phosphothreonine. A phosphoserine mark is found at S737, S753, S768, S790, S795, and S813. Residues 859-879 (LIFVLIWCLVIFLAEVAASLV) form a helical membrane-spanning segment. In terms of domain architecture, ABC transmembrane type-1 2 spans 859 to 1155 (LIFVLIWCLV…AVNSSIDVDS (297 aa)). The Extracellular portion of the chain corresponds to 880 to 918 (VLWFLGNTPPQDKGNSTYSRNNSYAVIITRTSSYYVFYI). N-linked (GlcNAc...) asparagine glycans are attached at residues N894 and N900. A discontinuously helical membrane pass occupies residues 919–939 (YVGVADTLLAMGFFRGLPLVH). Residues 940 to 990 (TLITVSKILHHKMLHSVLQAPMSTLNTLKAGGILNRFSKDIAILDDLLPLT) lie on the Cytoplasmic side of the membrane. A helical membrane pass occupies residues 991–1011 (IFDFIQLLLIVIGAIAVVAVL). Residues 1012–1013 (QP) are Extracellular-facing. The helical transmembrane segment at 1014–1034 (YIFVATVPVIVAFIMLRAYFL) threads the bilayer. Residues 1035 to 1095 (QTSQQLKQLE…TANWFLYLST (61 aa)) lie on the Cytoplasmic side of the membrane. The chain crosses the membrane as a helical span at residues 1096–1116 (LRWFQMRIEMIFVIFFIAVTF). Over 1117–1130 (ISILTTGEGEGTVG) the chain is Extracellular. A helical membrane pass occupies residues 1131-1151 (IILTLAMNIMSTLQWAVNSSI). Residues 1152–1481 (DVDSLMRSVS…TEEEVQDTRL (330 aa)) are Cytoplasmic-facing. One can recognise an ABC transporter 2 domain in the interval 1211–1444 (MTVKDLTAKY…RSLFRQAISP (234 aa)). Residues Y1220 and 1245–1252 (GRTGSGKS) contribute to the ATP site. The interval 1387–1481 (RTLKQAFADC…TEEEVQDTRL (95 aa)) is interaction with GORASP2. C1396 carries the S-palmitoyl cysteine lipid modification. Phosphoserine occurs at positions 1445 and 1457. The tract at residues 1462–1481 (QPQIAALKEETEEEVQDTRL) is disordered. Residues 1471-1481 (ETEEEVQDTRL) are compositionally biased toward acidic residues. Positions 1479–1481 (TRL) match the PDZ-binding motif.

The protein belongs to the ABC transporter superfamily. ABCC family. CFTR transporter (TC 3.A.1.202) subfamily. In terms of assembly, monomer; does not require oligomerization for channel activity. May form oligomers in the membrane. Interacts with SLC26A3, SLC26A6 and NHERF1. Interacts with SHANK2. Interacts with MYO6. Interacts (via C-terminus) with GOPC (via PDZ domain); this promotes CFTR internalization and thereby decreases channel activity. Interacts with SLC4A7 through NHERF1. Found in a complex with MYO5B and RAB11A. Interacts with ANO1. Interacts with SLC26A8. Interacts with AHCYL1; the interaction increases CFTR activity. Interacts with CSE1L. The core-glycosylated form interacts with GORASP2 (via PDZ GRASP-type 1 domain) in respone to ER stress. Interacts with MARCHF2; the interaction leads to CFTR ubiqtuitination and degradation. Interacts with ADGRG2. Post-translationally, N-glycosylated. Phosphorylated; cAMP treatment promotes phosphorylation and activates the channel. Dephosphorylation decreases the ATPase activity (in vitro). Phosphorylation at PKA sites activates the channel. Phosphorylation at PKC sites enhances the response to phosphorylation by PKA. Phosphorylated by AMPK; this inhibits channel activity. In terms of processing, ubiquitinated, leading to its degradation in the lysosome. Deubiquitination by USP10 in early endosomes enhances its endocytic recycling to the cell membrane. Ubiquitinated by RNF185 during ER stress. Ubiquitinated by MARCHF2.

It is found in the apical cell membrane. The protein localises to the early endosome membrane. It localises to the cell membrane. Its subcellular location is the recycling endosome membrane. The protein resides in the endoplasmic reticulum membrane. It is found in the nucleus. It catalyses the reaction ATP + H2O + closed Cl(-) channel = ADP + phosphate + open Cl(-) channel.. It carries out the reaction chloride(in) = chloride(out). The catalysed reaction is hydrogencarbonate(in) = hydrogencarbonate(out). The enzyme catalyses ATP + H2O = ADP + phosphate + H(+). Epithelial ion channel that plays an important role in the regulation of epithelial ion and water transport and fluid homeostasis. Mediates the transport of chloride ions across the cell membrane. Possesses an intrinsic ATPase activity and utilizes ATP to gate its channel; the passive flow of anions through the channel is gated by cycles of ATP binding and hydrolysis by the ATP-binding domains. The ion channel is also permeable to HCO(3)(-); selectivity depends on the extracellular chloride concentration. Exerts its function also by modulating the activity of other ion channels and transporters. Contributes to the regulation of the pH and the ion content of the epithelial fluid layer. Modulates the activity of the epithelial sodium channel (ENaC) complex, in part by regulating the cell surface expression of the ENaC complex. May regulate bicarbonate secretion and salvage in epithelial cells by regulating the transporter SLC4A7. Can inhibit the chloride channel activity of ANO1. Plays a role in the chloride and bicarbonate homeostasis during sperm epididymal maturation and capacitation. The sequence is that of Cystic fibrosis transmembrane conductance regulator from Papio anubis (Olive baboon).